The chain runs to 1215 residues: Reverse gyrase 2 (1215 aa).

Residues 3–44 form an RG N-terminal-type zinc finger; sequence GGVNAVYMGLCYNCGGNIDEDRLEKGLPCARCLPSPPRRATP. Zn(2+)-binding residues include Cys13, Cys16, Cys31, and Cys34. ATP-binding positions include Gln89 and 106-113; that span reads APTGVGKS. A Helicase ATP-binding domain is found at 93 to 249; it reads AKRLVKGDSF…SLVKARLKLY (157 aa). The short motif at 209 to 212 is the DEAD box element; sequence DDVD. Residues 614–1215 form a topoisomerase I region; sequence VRVKTTLLVV…TGDVMGQSEA (602 aa). Residues 618 to 783 form the Toprim domain; it reads TTLLVVESPT…NVRRGRFHEV (166 aa). Glu624 provides a ligand contact to Mg(2+). Residues 702-729 form an RG C-terminal-type zinc finger; it reads IKRCLDCGAQHTSSSPFCPRCGSPRQVD. Cys705, Cys708, Cys719, and Cys722 together coordinate Zn(2+). A Mg(2+)-binding site is contributed by Asp752. The 402-residue stretch at 799–1200 folds into the Topo IA-type catalytic domain; that stretch reads EKSLIEAQKV…SVWRMVDEAV (402 aa). Tyr943 functions as the O-(5'-phospho-DNA)-tyrosine intermediate in the catalytic mechanism.

It in the N-terminal section; belongs to the DEAD box helicase family. DDVD subfamily. The protein in the C-terminal section; belongs to the type IA topoisomerase family. As to quaternary structure, monomer. Requires Zn(2+) as cofactor. It depends on Mg(2+) as a cofactor.

The protein localises to the cytoplasm. It catalyses the reaction ATP + H2O = ADP + phosphate + H(+). Modifies the topological state of DNA by introducing positive supercoils in an ATP-dependent process, increasing the linking number in steps of +1. Binds to single-stranded DNA, transiently cleaves and then rejoins the ends, introducing a positive supercoil in the process. The scissile phosphodiester is attacked by the catalytic tyrosine of the enzyme, resulting in the formation of a DNA-(5'-phosphotyrosyl)-enzyme intermediate. Probably involved in rewinding DNA strands in regions of the chromosome that have opened up to allow replication, transcription, DNA repair and/or for DNA protection. This chain is Reverse gyrase 2, found in Aeropyrum pernix (strain ATCC 700893 / DSM 11879 / JCM 9820 / NBRC 100138 / K1).